Here is a 100-residue protein sequence, read N- to C-terminus: Testis development-related protein 1 (100 aa).

A disordered region spans residues 73–100; that stretch reads GLGSLGGQDSSGSLVQRASCELESPYEL.

Expressed in the testis but not in any other non-reproductive tissues (at protein level). Mainly located in spermatogenic cells in seminiferous tubules of adult testis.

It is found in the cytoplasm. The sequence is that of Testis development-related protein 1 (TDRG1) from Homo sapiens (Human).